The primary structure comprises 215 residues: Cytochrome c biogenesis ATP-binding export protein CcmA (215 aa).

In terms of domain architecture, ABC transporter spans 8–215 (LQATALACER…RDLDLGQWSA (208 aa)). 40 to 47 (GPNGCGKT) contacts ATP.

Belongs to the ABC transporter superfamily. CcmA exporter (TC 3.A.1.107) family. The complex is composed of two ATP-binding proteins (CcmA) and two transmembrane proteins (CcmB).

Its subcellular location is the cell inner membrane. The catalysed reaction is heme b(in) + ATP + H2O = heme b(out) + ADP + phosphate + H(+). Its function is as follows. Part of the ABC transporter complex CcmAB involved in the biogenesis of c-type cytochromes; once thought to export heme, this seems not to be the case, but its exact role is uncertain. Responsible for energy coupling to the transport system. The sequence is that of Cytochrome c biogenesis ATP-binding export protein CcmA from Pseudomonas syringae pv. syringae (strain B728a).